The following is a 1192-amino-acid chain: Coiled-coil domain-containing protein 40 (1192 aa).

Disordered stretches follow at residues 1-78, 126-153, 173-196, 211-246, and 261-289; these read MMDA…PGMD, KAKHRKVRPQAEVESTGRAAPEGELEVS, SSPEVSYSDISPLEMGEDDTNVSA, EPIEPTEPPEPAEPPKPAETPEDSTVRAPAHPYQRD, and GSLTPSDTDDLPLETDEPPQQESVQSTPR. Over residues 27–45 the composition is skewed to acidic residues; sequence PETEVEFIGETAPDTDVEF. The segment covering 215-228 has biased composition (pro residues); the sequence is PTEPPEPAEPPKPA. Acidic residues predominate over residues 267-279; that stretch reads DTDDLPLETDEPP. Residue Ser-306 is modified to Phosphoserine. Coiled coils occupy residues 308–369, 425–451, 581–649, 733–768, 830–871, 919–972, and 1044–1118; these read EALL…ATKQ, KTCQTANEERKKLAALQTEVESLALHL, DSEI…MLNK, NTNCKIDMHKKTLAEMDKEVKRFNDLITNSESEIAR, LQQE…KIAH, LRTL…EMRS, and QQRE…IVTL.

Belongs to the CCDC40 family. In terms of tissue distribution, specifically expressed in the embryonic node and midline.

The protein localises to the cytoplasm. The protein resides in the cell projection. Its subcellular location is the cilium. Its function is as follows. Required for assembly of dynein regulatory complex (DRC) and inner dynein arm (IDA) complexes, which are responsible for ciliary beat regulation, thereby playing a central role in motility in cilia and flagella. Probably acts together with CCDC39 to form a molecular ruler that determines the 96 nanometer (nm) repeat length and arrangements of components in cilia and flagella. Not required for outer dynein arm complexes assembly. Required for axonemal recruitment of CCDC39. In Mus musculus (Mouse), this protein is Coiled-coil domain-containing protein 40.